A 185-amino-acid polypeptide reads, in one-letter code: Photosystem I assembly protein Ycf4 (185 aa).

The next 2 helical transmembrane spans lie at 21 to 43 and 63 to 85; these read NFCW…TSSY and GLVM…CTIL.

Belongs to the Ycf4 family.

Its subcellular location is the plastid. It localises to the chloroplast thylakoid membrane. Seems to be required for the assembly of the photosystem I complex. The sequence is that of Photosystem I assembly protein Ycf4 from Brassica oleracea (Wild cabbage).